A 217-amino-acid chain; its full sequence is AFG2-interacting ribosome maturation factor (217 aa).

Part of the 55LCC heterohexameric ATPase complex composed at least of AIRIM, AFG2A, AFG2B and CINP. Does not associate with pre-60S ribosomal particles. Post-translationally, phosphorylated on serines by CK2 kinase.

The protein resides in the nucleus. It localises to the cytoplasm. Part of the 55LCC heterohexameric ATPase complex which is chromatin-associated and promotes replisome proteostasis to maintain replication fork progression and genome stability. Required for replication fork progression, sister chromatid cohesion, and chromosome stability. The ATPase activity is specifically enhanced by replication fork DNA and is coupled to cysteine protease-dependent cleavage of replisome substrates in response to replication fork damage. Uses ATPase activity to process replisome substrates in S-phase, facilitating their proteolytic turnover from chromatin to ensure DNA replication and mitotic fidelity. Involved in the cytoplasmic maturation steps of pre-60S ribosomal particles by promoting the release of shuttling protein RSL24D1/RLP24 from the pre-ribosomal particles. The chain is AFG2-interacting ribosome maturation factor (Airim) from Mus musculus (Mouse).